The primary structure comprises 124 residues: Small ribosomal subunit protein uS13 (124 aa).

Residues 94–124 (GLPLRGQRTKNNSRTRKGKRKTVANKKKATK) are disordered. Residues 100–124 (QRTKNNSRTRKGKRKTVANKKKATK) are compositionally biased toward basic residues.

The protein belongs to the universal ribosomal protein uS13 family. Part of the 30S ribosomal subunit. Forms a loose heterodimer with protein S19. Forms two bridges to the 50S subunit in the 70S ribosome.

Functionally, located at the top of the head of the 30S subunit, it contacts several helices of the 16S rRNA. In the 70S ribosome it contacts the 23S rRNA (bridge B1a) and protein L5 of the 50S subunit (bridge B1b), connecting the 2 subunits; these bridges are implicated in subunit movement. Contacts the tRNAs in the A and P-sites. This chain is Small ribosomal subunit protein uS13, found in Flavobacterium johnsoniae (strain ATCC 17061 / DSM 2064 / JCM 8514 / BCRC 14874 / CCUG 350202 / NBRC 14942 / NCIMB 11054 / UW101) (Cytophaga johnsonae).